Reading from the N-terminus, the 248-residue chain is Killer cell lectin-like receptor subfamily I member 1 (248 aa).

Residues 1 to 80 lie on the Cytoplasmic side of the membrane; the sequence is MLHSKRREYT…RQGPKSTVWR (80 aa). Short sequence motifs (ITIM motif) lie at residues 16-21 and 47-52; these read VTYTEL and LKYGEL. A helical; Signal-anchor for type II membrane protein transmembrane segment spans residues 81-101; the sequence is VVTGMLGALCVVLMTTTGILL. Residues 102–248 lie on the Extracellular side of the membrane; that stretch reads PKLFSSQEEQ…KKSYICEFNI (147 aa). 3 disulfides stabilise this stretch: cysteine 132-cysteine 145, cysteine 161-cysteine 244, and cysteine 223-cysteine 236. A C-type lectin domain is found at 139–245; it reads FGNNFYCVFK…CSAKKSYICE (107 aa). Residues asparagine 197, asparagine 214, and asparagine 220 are each glycosylated (N-linked (GlcNAc...) asparagine).

In terms of assembly, heterodimer with KLRE1. Interacts with PTPN6. As to expression, expressed in natural killer (NK) cells.

Its subcellular location is the cell membrane. Its function is as follows. Lectin-like receptor for natural killer (NK) cells. Heterodimer formation with KLRE1 mediates inhibition of NK cell cytolytic activity. The sequence is that of Killer cell lectin-like receptor subfamily I member 1 from Mus musculus (Mouse).